A 626-amino-acid chain; its full sequence is Nuclear RNA export factor 2 (626 aa).

Position 34 is a phosphoserine (serine 34). The region spanning 124-203 is the RRM domain; that stretch reads WFKVTIPYGI…IFVNHSTAPY (80 aa). LRR repeat units lie at residues 271–296, 297–320, 321–348, and 349–376; these read ELLS…EKAP, KVKT…VKGL, KLEE…AIRD, and CFPK…ETMK. Residues 391–541 form the NTF2 domain; that stretch reads LVLQFLQQYY…LCIVNDELFV (151 aa). Positions 570 to 625 constitute a TAP-C domain; that stretch reads QEQQEMVQAFSAQSGMKLEWSQKCLQDNEWNYTRAGQAFTMLQTEGKIPAEAFKQI.

This sequence belongs to the NXF family. Interacts with NXT1, NXT2, E1B-AP5, the REF proteins and with nucleoporins, Nup62, Nup153 and Nup214. Interacts with LUZP4. In terms of tissue distribution, expressed almost exclusively in testis. Also expressed in several cancers.

The protein localises to the nucleus. The protein resides in the nucleoplasm. It is found in the cytoplasm. In terms of biological role, involved in the export of mRNA from the nucleus to the cytoplasm. The sequence is that of Nuclear RNA export factor 2 (NXF2) from Homo sapiens (Human).